Here is a 413-residue protein sequence, read N- to C-terminus: Acetate kinase (413 aa).

N7 serves as a coordination point for Mg(2+). K14 is an ATP binding site. R98 provides a ligand contact to substrate. The active-site Proton donor/acceptor is D157. Residues 216 to 220, 291 to 293, and 339 to 343 contribute to the ATP site; these read HIGNG, DLR, and GVGEN. A Mg(2+)-binding site is contributed by E392.

Belongs to the acetokinase family. In terms of assembly, homodimer. Mg(2+) is required as a cofactor. Requires Mn(2+) as cofactor.

It localises to the cytoplasm. It carries out the reaction acetate + ATP = acetyl phosphate + ADP. It participates in metabolic intermediate biosynthesis; acetyl-CoA biosynthesis; acetyl-CoA from acetate: step 1/2. In terms of biological role, catalyzes the formation of acetyl phosphate from acetate and ATP. Can also catalyze the reverse reaction. The sequence is that of Acetate kinase from Synechocystis sp. (strain ATCC 27184 / PCC 6803 / Kazusa).